Here is a 291-residue protein sequence, read N- to C-terminus: Shikimate dehydrogenase (NADP(+)) (291 aa).

Shikimate-binding positions include 23–25 (SFS) and Thr70. The Proton acceptor role is filled by Lys74. Asn95 and Asp110 together coordinate shikimate. NADP(+) contacts are provided by residues 135-139 (GAGGA) and Leu232. Tyr234 lines the shikimate pocket. Gly255 provides a ligand contact to NADP(+).

Belongs to the shikimate dehydrogenase family. Homodimer.

The catalysed reaction is shikimate + NADP(+) = 3-dehydroshikimate + NADPH + H(+). It functions in the pathway metabolic intermediate biosynthesis; chorismate biosynthesis; chorismate from D-erythrose 4-phosphate and phosphoenolpyruvate: step 4/7. In terms of biological role, involved in the biosynthesis of the chorismate, which leads to the biosynthesis of aromatic amino acids. Catalyzes the reversible NADPH linked reduction of 3-dehydroshikimate (DHSA) to yield shikimate (SA). This chain is Shikimate dehydrogenase (NADP(+)), found in Desulforamulus reducens (strain ATCC BAA-1160 / DSM 100696 / MI-1) (Desulfotomaculum reducens).